We begin with the raw amino-acid sequence, 607 residues long: UvrABC system protein C (607 aa).

The region spanning G16–I94 is the GIY-YIG domain. The UVR domain maps to N203–V238.

This sequence belongs to the UvrC family. As to quaternary structure, interacts with UvrB in an incision complex.

It localises to the cytoplasm. The UvrABC repair system catalyzes the recognition and processing of DNA lesions. UvrC both incises the 5' and 3' sides of the lesion. The N-terminal half is responsible for the 3' incision and the C-terminal half is responsible for the 5' incision. The sequence is that of UvrABC system protein C from Pseudomonas fluorescens (strain SBW25).